The primary structure comprises 143 residues: Large ribosomal subunit protein uL13 (143 aa).

This sequence belongs to the universal ribosomal protein uL13 family. As to quaternary structure, part of the 50S ribosomal subunit.

Functionally, this protein is one of the early assembly proteins of the 50S ribosomal subunit, although it is not seen to bind rRNA by itself. It is important during the early stages of 50S assembly. The polypeptide is Large ribosomal subunit protein uL13 (Desulfitobacterium hafniense (strain Y51)).